Reading from the N-terminus, the 305-residue chain is Mitochondrial citrate transporter D (305 aa).

Solcar repeat units lie at residues 10 to 101 (LPFG…WGAF), 111 to 197 (QTQS…VRAQ), and 211 to 298 (RNDL…VMDF). A run of 6 helical transmembrane segments spans residues 16-36 (FIAG…LDVV), 78-98 (SAPI…NDSW), 118-137 (LTGA…FELV), 176-196 (TLWR…QVRA), 208-228 (QQTR…TILN), and 270-291 (LYKG…LLVV).

It belongs to the mitochondrial carrier (TC 2.A.29) family.

The protein resides in the mitochondrion inner membrane. It carries out the reaction citrate(in) + H(+)(in) = citrate(out) + H(+)(out). Mitochondrial transporter that mediates citrate export from mitochondria to cytoplasm. Both ctpA, ctpB, and ctpD play important roles in citric acid transport across the mitochondrial membrane and function in a redundant manner. The chain is Mitochondrial citrate transporter D from Aspergillus niger (strain ATCC 1015 / CBS 113.46 / FGSC A1144 / LSHB Ac4 / NCTC 3858a / NRRL 328 / USDA 3528.7).